A 340-amino-acid polypeptide reads, in one-letter code: Short-chain dehydrogenase/reductase prx1 (340 aa).

Positions 60, 84, 104, 131, and 162 each coordinate NADP(+). Ser-184 serves as the catalytic Proton donor. Residues Tyr-210 and Lys-214 each contribute to the NADP(+) site. The active-site Proton acceptor is the Tyr-210. Lys-214 serves as the catalytic Lowers pKa of active site Tyr.

This sequence belongs to the short-chain dehydrogenases/reductases (SDR) family.

It functions in the pathway sesquiterpene biosynthesis. Short-chain dehydrogenase/reductase; part of the gene cluster that mediates the biosynthesis of PR-toxin, a bicyclic sesquiterpene belonging to the eremophilane class and acting as a mycotoxin. The first step of the pathway is catalyzed by the aristolochene synthase which performs the cyclization of trans,trans-farnesyl diphosphate (FPP) to the bicyclic sesquiterpene aristolochene. Following the formation of aristolochene, the non-oxygenated aristolochene is converted to the trioxygenated intermediate eremofortin B, via 7-epi-neopetasone. This conversion appears to involve three enzymes, a hydroxysterol oxidase-like enzyme, the quinone-oxidase prx3 that forms the quinone-type-structure in the bicyclic nucleus of aristolochene with the C8-oxo group and the C-3 hydroxyl group, and the P450 monooxygenase prx9 that introduces the epoxide at the double bond between carbons 1 and 2. No monoxy or dioxy-intermediates have been reported to be released to the broth, so these three early oxidative reactions may be coupled together. Eremofortin B is further oxidized by another P450 monooxygenase, that introduces a second epoxide between carbons 7 and 11 prior to acetylation to eremofortin A by the acetyltransferase prx11. The second epoxidation may be performed by a second P450 monooxygenase. After the acetylation step, eremofortin A is converted to eremofortin C and then to PR-toxin. First the conversion of eremofortin A to eremofortin C proceeds by oxidation of the side chain of the molecule at C-12 and is catalyzed by the short-chain oxidoreductase prx1. The cytochrome P450 monooxygenase prx8 also plays a role in this step. The primary alcohol formed at C-12 is finally oxidized by the short-chain alcohol dehydrogenase prx4 that forms PR-toxin. The sequence is that of Short-chain dehydrogenase/reductase prx1 from Penicillium rubens (strain ATCC 28089 / DSM 1075 / NRRL 1951 / Wisconsin 54-1255) (Penicillium chrysogenum).